Consider the following 743-residue polypeptide: Keratin, type I cytoskeletal 9 (743 aa).

Residues 1-16 are compositionally biased toward low complexity; sequence MSCRQSSSSFWSSSSS. Residues 1–46 form a disordered region; that stretch reads MSCRQSSSSFWSSSSSCGGGGGRGGSGGSMRSSFSRSSRAGGGGGG. The tract at residues 1 to 130 is head; the sequence is MSCRQSSSSF…GGEGGILNTN (130 aa). Phosphoserine is present on residues Ser14 and Ser16. The span at 17 to 28 shows a compositional bias: gly residues; sequence CGGGGGRGGSGG. Positions 29-39 are enriched in low complexity; sequence SMRSSFSRSSR. A phosphoserine mark is found at Ser55 and Ser155. The interval 131 to 166 is coil 1A; that stretch reads EKIVMQNLNSRLASYMEKVLELEESNTAMEKQIQDW. Positions 131 to 443 constitute an IF rod domain; that stretch reads EKIVMQNLNS…ELLEGGQQDF (313 aa). Residues 167–185 are linker 1; it reads YSKRGPKVFQKDNTHYYDT. Residues 186-277 form a coil 1B region; sequence IEDLKDRIVD…KNHKEEMSQL (92 aa). The segment at 278 to 300 is linker 12; sequence TGQNDGDVNVEINVAPSTDLTRV. Residues 301 to 439 form a coil 2 region; that stretch reads LNDMREEYEQ…ETYRELLEGG (139 aa). Disordered stretches follow at residues 440 to 468 and 501 to 743; these read QQDF…GSYG and GGSG…KMRY. A tail region spans residues 440 to 709; it reads QQDFESSGAG…GGGSGSGGGS (270 aa). Gly residues-rich tracts occupy residues 449 to 468 and 501 to 717; these read GQIG…GSYG and GGSG…GGGN.

It belongs to the intermediate filament family. In terms of assembly, heterotetramer of two type I and two type II keratins. In terms of tissue distribution, expressed in footpad epidermis and testis (at protein level).

May serve an important special function either in the mature palmar and plantar skin tissue or in the morphogenetic program of the formation of these tissues. Plays a role in keratin filament assembly. Plays an essential role in the correct development of sperm. In Mus musculus (Mouse), this protein is Keratin, type I cytoskeletal 9.